The chain runs to 457 residues: UDP-N-acetyl-alpha-D-muramoyl-L-alanyl-L-glutamate epimerase (457 aa).

Belongs to the MurL family.

It carries out the reaction UDP-N-acetyl-alpha-D-muramoyl-L-alanyl-L-glutamate + ATP + H2O = UDP-N-acetyl-alpha-D-muramoyl-L-alanyl-D-glutamate + AMP + diphosphate + H(+). It participates in cell wall biogenesis; peptidoglycan biosynthesis. Its function is as follows. Cell wall formation. Catalyzes epimerization of the terminal L-glutamate in UDP-N-acetyl-alpha-D-muramoyl-L-alanyl-L-glutamate. The polypeptide is UDP-N-acetyl-alpha-D-muramoyl-L-alanyl-L-glutamate epimerase (Salinispora tropica (strain ATCC BAA-916 / DSM 44818 / JCM 13857 / NBRC 105044 / CNB-440)).